Reading from the N-terminus, the 186-residue chain is Protein Syd (186 aa).

The protein belongs to the Syd family.

Its subcellular location is the cell inner membrane. Its function is as follows. Interacts with the SecY protein in vivo. May bind preferentially to an uncomplexed state of SecY, thus functioning either as a chelating agent for excess SecY in the cell or as a regulatory factor that negatively controls the translocase function. The polypeptide is Protein Syd (Pseudoalteromonas atlantica (strain T6c / ATCC BAA-1087)).